The chain runs to 412 residues: Maintenance of mitochondrial morphology protein 1 (412 aa).

Residues 1-81 (MTKELIKTEA…PANNWTFTQG (81 aa)) are Lumenal-facing. The helical transmembrane segment at 82-102 (LVLGQISVIFIIIVFVKFFVF) threads the bilayer. Residues 103 to 412 (ADSSTIPTKK…RSDSGTSENL (310 aa)) are Cytoplasmic-facing. One can recognise an SMP-LTD domain in the interval 165-382 (SPESLDWFNV…EPRFQVVRLP (218 aa)). The tract at residues 389 to 412 (KNTREPINKKTSVSRSDSGTSENL) is disordered. The span at 397–412 (KKTSVSRSDSGTSENL) shows a compositional bias: polar residues.

It belongs to the MMM1 family. In terms of assembly, homodimer. Component of the ER-mitochondria encounter structure (ERMES) or MDM complex, composed of MMM1, MDM10, MDM12 and MDM34. An MMM1 homodimer associates with one molecule of MDM12 on each side in a pairwise head-to-tail manner, and the SMP-LTD domains of MMM1 and MDM12 generate a continuous hydrophobic tunnel for phospholipid trafficking.

Its subcellular location is the endoplasmic reticulum membrane. Its function is as follows. Component of the ERMES/MDM complex, which serves as a molecular tether to connect the endoplasmic reticulum (ER) and mitochondria. Components of this complex are involved in the control of mitochondrial shape and protein biogenesis, and function in nonvesicular lipid trafficking between the ER and mitochondria. The MDM12-MMM1 subcomplex functions in the major beta-barrel assembly pathway that is responsible for biogenesis of all outer membrane beta-barrel proteins, and acts in a late step after the SAM complex. The MDM10-MDM12-MMM1 subcomplex further acts in the TOM40-specific pathway after the action of the MDM12-MMM1 complex. Essential for establishing and maintaining the structure of mitochondria and maintenance of mtDNA nucleoids. This chain is Maintenance of mitochondrial morphology protein 1, found in Candida tropicalis (strain ATCC MYA-3404 / T1) (Yeast).